A 341-amino-acid chain; its full sequence is Anthranilate phosphoribosyltransferase (341 aa).

5-phospho-alpha-D-ribose 1-diphosphate-binding positions include Gly-81, 84–85, Ser-89, 91–94, 109–117, and Ser-121; these read GD, NIST, and KHGNRSASS. Gly-81 provides a ligand contact to anthranilate. Position 93 (Ser-93) interacts with Mg(2+). An anthranilate-binding site is contributed by Asn-112. Arg-167 contacts anthranilate. Asp-225 and Glu-226 together coordinate Mg(2+).

The protein belongs to the anthranilate phosphoribosyltransferase family. Homodimer. Mg(2+) is required as a cofactor.

The enzyme catalyses N-(5-phospho-beta-D-ribosyl)anthranilate + diphosphate = 5-phospho-alpha-D-ribose 1-diphosphate + anthranilate. Its pathway is amino-acid biosynthesis; L-tryptophan biosynthesis; L-tryptophan from chorismate: step 2/5. Catalyzes the transfer of the phosphoribosyl group of 5-phosphorylribose-1-pyrophosphate (PRPP) to anthranilate to yield N-(5'-phosphoribosyl)-anthranilate (PRA). This chain is Anthranilate phosphoribosyltransferase, found in Nocardioides sp. (strain ATCC BAA-499 / JS614).